The primary structure comprises 84 residues: Transmembrane protein EP84R (84 aa).

Transmembrane regions (helical) follow at residues 31 to 51 (VIGVILLVISLLFIFIGIIIL) and 60 to 80 (AASIFIVLSLILGGGGFFLIY).

This sequence belongs to the asfivirus EP84R family.

The protein localises to the virion membrane. The chain is Transmembrane protein EP84R from Ornithodoros (relapsing fever ticks).